The primary structure comprises 70 residues: Large ribosomal subunit protein bL31 (70 aa).

Zn(2+)-binding residues include cysteine 16, cysteine 18, cysteine 37, and cysteine 40.

It belongs to the bacterial ribosomal protein bL31 family. Type A subfamily. In terms of assembly, part of the 50S ribosomal subunit. It depends on Zn(2+) as a cofactor.

Its function is as follows. Binds the 23S rRNA. The chain is Large ribosomal subunit protein bL31 from Haemophilus influenzae (strain PittEE).